Reading from the N-terminus, the 510-residue chain is ATP synthase subunit alpha (510 aa).

Position 170–177 (170–177 (GDRQTGKT)) interacts with ATP.

It belongs to the ATPase alpha/beta chains family. F-type ATPases have 2 components, CF(1) - the catalytic core - and CF(0) - the membrane proton channel. CF(1) has five subunits: alpha(3), beta(3), gamma(1), delta(1), epsilon(1). CF(0) has three main subunits: a(1), b(2) and c(9-12). The alpha and beta chains form an alternating ring which encloses part of the gamma chain. CF(1) is attached to CF(0) by a central stalk formed by the gamma and epsilon chains, while a peripheral stalk is formed by the delta and b chains.

The protein localises to the cell inner membrane. The catalysed reaction is ATP + H2O + 4 H(+)(in) = ADP + phosphate + 5 H(+)(out). Functionally, produces ATP from ADP in the presence of a proton gradient across the membrane. The alpha chain is a regulatory subunit. The protein is ATP synthase subunit alpha of Dictyoglomus thermophilum (strain ATCC 35947 / DSM 3960 / H-6-12).